We begin with the raw amino-acid sequence, 136 residues long: Small nuclear ribonucleoprotein Sm D3 (136 aa).

The Sm domain maps to 6-78 (VPIKILHEAE…IRFMILPDML (73 aa)). Residues 98-136 (GLGGLDQRGRGRGTAFRRPMGRGGPRGMSRPGGAPTFRG) are disordered.

The protein belongs to the snRNP core protein family.

Its subcellular location is the nucleus. The protein localises to the cytoplasm. It localises to the cytosol. Functionally, plays a role in pre-mRNA splicing as a core component of the spliceosomal U1, U2, U4 and U5 small nuclear ribonucleoproteins (snRNPs), the building blocks of the spliceosome. In Caenorhabditis elegans, this protein is Small nuclear ribonucleoprotein Sm D3 (snr-1).